Consider the following 332-residue polypeptide: Transaldolase (332 aa).

The active-site Schiff-base intermediate with substrate is the Lys-135.

This sequence belongs to the transaldolase family. Type 1 subfamily. Homodimer.

The protein localises to the cytoplasm. It catalyses the reaction D-sedoheptulose 7-phosphate + D-glyceraldehyde 3-phosphate = D-erythrose 4-phosphate + beta-D-fructose 6-phosphate. Its pathway is carbohydrate degradation; pentose phosphate pathway; D-glyceraldehyde 3-phosphate and beta-D-fructose 6-phosphate from D-ribose 5-phosphate and D-xylulose 5-phosphate (non-oxidative stage): step 2/3. Its function is as follows. Transaldolase is important for the balance of metabolites in the pentose-phosphate pathway. This is Transaldolase from Prochlorococcus marinus (strain NATL1A).